The following is a 266-amino-acid chain: MPIDTPYEDLLRLVTERGTPKSDRTGTGTRSLFGHQMRYDLSAGFPLITTKKVHTKSVIYELLWFLRGDSNVRWLQEHGVTIWDEWASETGDLGPIYGVQWRSWPTPSGEHIDQISSALELLKSDPDSRRNIVSAWNVGEIPQMALPPCHAFFQFYVADGKLSCQLYQRSADLFLGVPFNIASYALLTHMMAAQAGLDVGEFIWTGGDCHIYDNHTEQVALQLSREPRPYPELVLAPRDSIFDYTYEDIAIVNYDPHPAIKAPVAV.

Arg24 is a dUMP binding site. His54 contacts (6R)-5,10-methylene-5,6,7,8-tetrahydrofolate. 129-130 (RR) contributes to the dUMP binding site. The active-site Nucleophile is Cys149. DUMP-binding positions include 169-172 (RSAD), Asn180, and 210-212 (HIY). Asp172 provides a ligand contact to (6R)-5,10-methylene-5,6,7,8-tetrahydrofolate. Residue Ala265 participates in (6R)-5,10-methylene-5,6,7,8-tetrahydrofolate binding.

It belongs to the thymidylate synthase family. Bacterial-type ThyA subfamily. Homodimer.

Its subcellular location is the cytoplasm. It catalyses the reaction dUMP + (6R)-5,10-methylene-5,6,7,8-tetrahydrofolate = 7,8-dihydrofolate + dTMP. The protein operates within pyrimidine metabolism; dTTP biosynthesis. Its function is as follows. Catalyzes the reductive methylation of 2'-deoxyuridine-5'-monophosphate (dUMP) to 2'-deoxythymidine-5'-monophosphate (dTMP) while utilizing 5,10-methylenetetrahydrofolate (mTHF) as the methyl donor and reductant in the reaction, yielding dihydrofolate (DHF) as a by-product. This enzymatic reaction provides an intracellular de novo source of dTMP, an essential precursor for DNA biosynthesis. This chain is Thymidylate synthase, found in Mycolicibacterium smegmatis (strain ATCC 700084 / mc(2)155) (Mycobacterium smegmatis).